A 206-amino-acid polypeptide reads, in one-letter code: Protein tyrosine phosphatase receptor type C-associated protein (206 aa).

A helical membrane pass occupies residues 34–54 (VTVVLLLLLLLLLATGLALAW). A disordered region spans residues 98–173 (GSTDNDLERQ…PGPASAGGSA (76 aa)). 2 positions are modified to phosphoserine: serine 99 and serine 153. Positions 161–173 (LGSPGPASAGGSA) are enriched in low complexity.

In terms of assembly, interacts with CD45/PTPRC. Phosphorylated on tyrosine residues.

The protein localises to the membrane. The protein is Protein tyrosine phosphatase receptor type C-associated protein (PTPRCAP) of Homo sapiens (Human).